The primary structure comprises 60 residues: Large ribosomal subunit protein bL32 (60 aa).

This sequence belongs to the bacterial ribosomal protein bL32 family.

This is Large ribosomal subunit protein bL32 from Pediococcus pentosaceus (strain ATCC 25745 / CCUG 21536 / LMG 10740 / 183-1w).